The primary structure comprises 471 residues: Coagulation factor IX (471 aa).

A signal peptide spans 1–19 (MAKIPLILSFCLLEAFLGA). Positions 20–39 (ESTVFIENKEASTVLSRTRR) are excised as a propeptide. In terms of domain architecture, Gla spans 40–85 (GNSNRLEELIPGNLERECIEEKCSFEEAREVFENTEKTMEFWKIYI). Ca(2+) is bound by residues N41, E46, E47, E54, E56, E59, E60, E65, E66, and E69. Residues E46, E47, E54, E56, E59, E60, E65, E66, E69, E72, E75, and E79 each carry the 4-carboxyglutamate modification. E54 contacts Mg(2+). C57 and C62 are joined by a disulfide. E59 provides a ligand contact to Mg(2+). Position 65 (E65) interacts with Mg(2+). E69 is a binding site for Mg(2+). E75, E79, D86, G87, and Q89 together coordinate Ca(2+). Residues E75 and E79 each contribute to the Mg(2+) site. In terms of domain architecture, EGF-like 1; calcium-binding spans 86–122 (DGDQCNSNPCKNGAVCKDGVSSYECMCPPGYGGRNCE). Disulfide bonds link C90–C101, C95–C110, C112–C121, C127–C138, C134–C148, C150–C163, C171–C345, C262–C278, C392–C406, and C417–C445. A glycan (O-linked (Glc...) serine) is linked at S92. D103 is a binding site for Ca(2+). The residue at position 103 (D103) is a (3R)-3-hydroxyaspartate. S107 carries the phosphoserine modification. An EGF-like 2 domain is found at 123-164 (IDSTCATKNGGCEHFCRHDTPQKAVCSCASGYKLHEDGKSCK). Positions 186–235 (TENTIERWNITAHDEGDAHDEALDITEPPPPPTTSAAPAKIVPITKNDTR) are cleaved as a propeptide — activation peptide. The 234-residue stretch at 236–469 (VVGGYDSVKG…YVKWIRETTR (234 aa)) folds into the Peptidase S1 domain. H277 serves as the catalytic Charge relay system. The Ca(2+) site is built by E291, N293, E296, and E301. The active-site Charge relay system is D325. The active-site Charge relay system is the S421.

The protein belongs to the peptidase S1 family. As to quaternary structure, heterodimer of a light chain and a heavy chain; disulfide-linked. In terms of processing, activated by factor XIa, which excises the activation peptide. The propeptide can also be removed by snake venom protease. Activated by coagulation factor VIIa-tissue factor (F7-F3) complex in calcium-dependent manner. The iron and 2-oxoglutarate dependent 3-hydroxylation of aspartate and asparagine is (R) stereospecific within EGF domains.

Its subcellular location is the secreted. It carries out the reaction Selective cleavage of Arg-|-Ile bond in factor X to form factor Xa.. Its function is as follows. Factor IX is a vitamin K-dependent plasma protein that participates in the intrinsic pathway of blood coagulation by converting factor X to its active form in the presence of Ca(2+) ions, phospholipids, and factor VIIIa. This chain is Coagulation factor IX (F9), found in Gallus gallus (Chicken).